The primary structure comprises 90 residues: Sec-independent protein translocase protein TatA (90 aa).

Residues 1–21 (MGLPGGWELVLIVGVLVLLFG) traverse the membrane as a helical segment. Over residues 42-60 (EARGMKEDEEAAKREKQAK) the composition is skewed to basic and acidic residues. The disordered stretch occupies residues 42 to 90 (EARGMKEDEEAAKREKQAKSEPQQLTAGESSAPTVASPVEETQRNDSKK). Residues 61–75 (SEPQQLTAGESSAPT) are compositionally biased toward polar residues.

Belongs to the TatA/E family. In terms of assembly, the Tat system comprises two distinct complexes: a TatABC complex, containing multiple copies of TatA, TatB and TatC subunits, and a separate TatA complex, containing only TatA subunits. Substrates initially bind to the TatABC complex, which probably triggers association of the separate TatA complex to form the active translocon.

The protein localises to the cell membrane. Functionally, part of the twin-arginine translocation (Tat) system that transports large folded proteins containing a characteristic twin-arginine motif in their signal peptide across membranes. TatA could form the protein-conducting channel of the Tat system. The polypeptide is Sec-independent protein translocase protein TatA (Saccharopolyspora erythraea (strain ATCC 11635 / DSM 40517 / JCM 4748 / NBRC 13426 / NCIMB 8594 / NRRL 2338)).